The sequence spans 180 residues: CASP-like protein XL3 (180 aa).

Residues 1 to 7 (MELSIQK) lie on the Cytoplasmic side of the membrane. A helical transmembrane segment spans residues 8–28 (IEALIRLSTIVMLVLTACLIG). The Extracellular portion of the chain corresponds to 29–49 (LDSQTKVIFYVQKKASFKDLR). The chain crosses the membrane as a helical span at residues 50-70 (ALVGLLYITSLAAAYNLLQLC). The Cytoplasmic segment spans residues 71–98 (CSSFSASYKGTSLQSYAYLAWLRYILDQ). A helical transmembrane segment spans residues 99–119 (AVVYAVFAGNLAALEHSFLVL). Over 120–140 (TGEENFQWLKWCNKYTRFCTQ) the chain is Extracellular. Residues 141 to 161 (IGGSLLCGFVASLLMFSIASI) traverse the membrane as a helical segment. At 162-180 (SAFNLFRQYSPTKFMHLKL) the chain is on the cytoplasmic side.

Belongs to the Casparian strip membrane proteins (CASP) family. Homodimer and heterodimers.

It is found in the cell membrane. The sequence is that of CASP-like protein XL3 (XL3) from Gossypium hirsutum (Upland cotton).